The following is a 202-amino-acid chain: Nudix hydrolase 13, mitochondrial (202 aa).

The Nudix hydrolase domain maps to 18–167 (NFRLVSGCIP…WMQSALEEFL (150 aa)). A Nudix box motif is present at residues 65–86 (GGWEDDETVLEAASREAMEEAG). Mg(2+)-binding residues include Glu80 and Glu84.

It belongs to the Nudix hydrolase family. As to quaternary structure, monomer. It depends on Mg(2+) as a cofactor. Expressed in roots, leaves, stems and inflorescences.

It is found in the mitochondrion. With respect to regulation, inhibited by fluoride. Mediates the hydrolysis of some nucleoside diphosphate derivatives. Can use diadenosine 5',5'''-P(1)P(6) hexaphosphate (Ap(6)A), diadenosine 5',5'''-P(1)P(5) pentaphosphate (Ap(5)A) and adenosine tetraphosphate (p(4)A) as substrates, but not diadenosine 5',5'''-P(1)P(4) tetraphosphate (Ap(4)A), diadenosine 5',5'''-P(1)P(3) triphosphate (Ap(3)A), deoxyribonucleoside triphosphates, ribonucleoside triphosphates, diphosphoinositol pentakisphosphate (PP-InsP(5)) and 5-phospho-alpha-D-ribosyl diphosphate (PRPP). The sequence is that of Nudix hydrolase 13, mitochondrial (NUDT13) from Arabidopsis thaliana (Mouse-ear cress).